The following is a 252-amino-acid chain: Trans-aconitate 2-methyltransferase (252 aa).

Belongs to the methyltransferase superfamily. Tam family.

The protein resides in the cytoplasm. The enzyme catalyses trans-aconitate + S-adenosyl-L-methionine = (E)-3-(methoxycarbonyl)pent-2-enedioate + S-adenosyl-L-homocysteine. Its function is as follows. Catalyzes the S-adenosylmethionine monomethyl esterification of trans-aconitate. This Escherichia coli O17:K52:H18 (strain UMN026 / ExPEC) protein is Trans-aconitate 2-methyltransferase.